The following is a 92-amino-acid chain: RNA-binding protein Hfq (92 aa).

The Sm domain occupies 9–68; that stretch reads DPFLNALRRERVPVSIYLVNGIKLQGQVESFDQFVILLKNTVSQMVYKHAISTVVPSRPF. Over residues 73–82 the composition is skewed to polar residues; the sequence is HQATNAQAGY. The disordered stretch occupies residues 73–92; it reads HQATNAQAGYNAQHDDGDEK.

Belongs to the Hfq family. Homohexamer.

RNA chaperone that binds small regulatory RNA (sRNAs) and mRNAs to facilitate mRNA translational regulation in response to envelope stress, environmental stress and changes in metabolite concentrations. Also binds with high specificity to tRNAs. The sequence is that of RNA-binding protein Hfq from Shewanella pealeana (strain ATCC 700345 / ANG-SQ1).